The following is a 1296-amino-acid chain: Protein broad-minded (1296 aa).

The Rab-GAP TBC domain maps to 1158-1281; the sequence is GIHPIYFCSA…YMENLEQNYR (124 aa).

As to quaternary structure, interacts with CDK20, which promotes CDK20 stability and function. Interacts with FAM149B1; may play a role in cilium assembly.

It localises to the cytoplasm. The protein localises to the cell projection. Its subcellular location is the cilium. Its function is as follows. Required for high-level Shh responses in the developing neural tube. Together with CDK20, controls the structure of the primary cilium by coordinating assembly of the ciliary membrane and axoneme, allowing GLI2 to be properly activated in response to Shh signaling. This is Protein broad-minded (Tbc1d32) from Mus musculus (Mouse).